The chain runs to 169 residues: Peptide deformylase 1 (169 aa).

The Fe cation site is built by Cys91 and His133. Glu134 is an active-site residue. His137 contacts Fe cation.

Belongs to the polypeptide deformylase family. Fe(2+) serves as cofactor.

The enzyme catalyses N-terminal N-formyl-L-methionyl-[peptide] + H2O = N-terminal L-methionyl-[peptide] + formate. Removes the formyl group from the N-terminal Met of newly synthesized proteins. Requires at least a dipeptide for an efficient rate of reaction. N-terminal L-methionine is a prerequisite for activity but the enzyme has broad specificity at other positions. The polypeptide is Peptide deformylase 1 (Vibrio cholerae serotype O1 (strain ATCC 39315 / El Tor Inaba N16961)).